A 131-amino-acid polypeptide reads, in one-letter code: MFFRTSSLFTTIVAFTVMAAAMPGNPKPTTTTVTVTAPAHPTATAPASECKTGPVQCCNSVQSSKSPAASLLLGLLGIVLQGVAVPVGLTCNPITVIGVGGNSCSAQTVCCENNNFSGLIAIGCTPINLSL.

Positions 1-21 are cleaved as a signal peptide; it reads MFFRTSSLFTTIVAFTVMAAA. Disulfide bonds link cysteine 50–cysteine 110, cysteine 57–cysteine 104, cysteine 58–cysteine 91, and cysteine 111–cysteine 124. N-linked (GlcNAc...) asparagine glycosylation is found at asparagine 115 and asparagine 128.

Belongs to the fungal hydrophobin family. Self-assembles to form functional amyloid fibrils called rodlets. Self-assembly into fibrillar rodlets occurs spontaneously at hydrophobic:hydrophilic interfaces and the rodlets further associate laterally to form amphipathic monolayers. In terms of tissue distribution, expressionn is switched off in the fruiting bodies but abundantly expressed in the vegetative mycelium of both monokaryon and dikaryon.

The protein resides in the secreted. It is found in the cell wall. Functionally, aerial growth, conidiation, and dispersal of filamentous fungi in the environment rely upon a capability of their secreting small amphipathic proteins called hydrophobins (HPBs) with low sequence identity. Class I can self-assemble into an outermost layer of rodlet bundles on aerial cell surfaces, conferring cellular hydrophobicity that supports fungal growth, development and dispersal; whereas Class II form highly ordered films at water-air interfaces through intermolecular interactions but contribute nothing to the rodlet structure. POH2 is a class I hydrophobin that causes a large drop in the water-surface tension, enabling hyphae to breach the interface and grow into the air, in both the primary and the secondary mycelium. In the latter mycelium POH2 maight also play a role in the emergence of fruiting bodies. Secreted POH2 could also play a role in facilitating lignin degradation. This is Class I hydrophobin POH2 from Pleurotus ostreatus (Oyster mushroom).